The following is a 237-amino-acid chain: Phosphoribosylaminoimidazole-succinocarboxamide synthase (237 aa).

Belongs to the SAICAR synthetase family.

It catalyses the reaction 5-amino-1-(5-phospho-D-ribosyl)imidazole-4-carboxylate + L-aspartate + ATP = (2S)-2-[5-amino-1-(5-phospho-beta-D-ribosyl)imidazole-4-carboxamido]succinate + ADP + phosphate + 2 H(+). It participates in purine metabolism; IMP biosynthesis via de novo pathway; 5-amino-1-(5-phospho-D-ribosyl)imidazole-4-carboxamide from 5-amino-1-(5-phospho-D-ribosyl)imidazole-4-carboxylate: step 1/2. The polypeptide is Phosphoribosylaminoimidazole-succinocarboxamide synthase (Shigella boydii serotype 4 (strain Sb227)).